A 162-amino-acid chain; its full sequence is Anthrone oxygenase nsrD (162 aa).

3 helical membrane-spanning segments follow: residues 17-37 (FLSGSMMSLSALVIPLFLDTI), 54-74 (GSIYMPALCVATCGIYGYVAL), and 86-106 (PYVLAAVSTLAMVPFTWWVMV). A glycan (N-linked (GlcNAc...) asparagine) is linked at Asn109. The chain crosses the membrane as a helical span at residues 130-150 (LVVKWAWLHVVRSLYPLFGAF).

The protein belongs to the anthrone oxygenase family.

The protein localises to the membrane. It carries out the reaction emodin anthrone + O2 = emodin + H2O + H(+). The protein operates within secondary metabolite biosynthesis. Functionally, anthrone oxygenase; part of the gene cluster that mediates the biosynthesis of the tetrahydroxanthone dimer neosartorin, which exhibits antibacterial activity. The two different monomeric units appear to be synthesized by the same set of enzymes, among which the Baeyer-Villiger monooxygenase nsrF is the key enzyme for the divergence of the biosynthetic routes. The pathway begins with the synthesis of atrochrysone thioester by the polyketide synthase nsrB. The atrochrysone carboxyl ACP thioesterase nsrC then breaks the thioester bond and releases the atrochrysone carboxylic acid from AacuL. Atrochrysone carboxylic acid is decarboxylated by the decarboxylase nsrE, and oxidized by the anthrone oxygenase nsrD to yield emodin. Emodin is then reduced to emodin hydroquinone by the oxidoreductase nsrR. A-ring reduction by the short chain dehydrogenase nsrJ, dehydration by the scytalone dehydratase-like protein nsrI and probable spontaneous re-oxidation, results in overall deoxygenation to chrysophanol. The Baeyer-Villiger monooxygenase nsrF accepts chrysophanol as a substrate to insert one oxygen atom at two different positions to yield the precursors of both monomric units. NsrF is promiscuous/flexible in interacting with the 2 (non methylated and methylated) aromatic rings of chrysophanol, thus diverging the biosynthetic pathway at this point. After the hydrolysis of the lactones, methylesterification by the methyltransferase nsrG yields respectively moniliphenone and 2,2',6'-trihydroxy-4-methyl-6-methoxya-cyldiphenylmethanone. The next steps are the hydroxylation by the FAD-dependent monooxygenase nsrK, followed by isomerization by the monooxygenase nsrQ. The short chain dehydrogenase/reductase nsrO then catalyzes the C-5 ketoreduction to give the xanthone skeleton of blennolide C and 5-acetylblennolide A. The acetyltransferase nsrL has a strict substrate specificity and uses only blennolide A but not blennolide C to yield 5-acetylblennolide A as the single-acetylated product. In the final step of the biosynthesis, the heterodimerization of the 2 xanthones, blennolide C and 5-acetylblennolide A, is catalyzed by the cytochrome P450 monooxygenase nsrP. NsrP can utilize at least three different xanthones as its substrates to perform the dimerization reaction. The sequence is that of Anthrone oxygenase nsrD from Aspergillus novofumigatus (strain IBT 16806).